Reading from the N-terminus, the 86-residue chain is CRISPR-associated endoribonuclease Cas2 (86 aa).

Aspartate 8 serves as a coordination point for Mg(2+).

It belongs to the CRISPR-associated endoribonuclease Cas2 protein family. Homodimer, forms a heterotetramer with a Cas1 homodimer. It depends on Mg(2+) as a cofactor.

Its function is as follows. CRISPR (clustered regularly interspaced short palindromic repeat), is an adaptive immune system that provides protection against mobile genetic elements (viruses, transposable elements and conjugative plasmids). CRISPR clusters contain sequences complementary to antecedent mobile elements and target invading nucleic acids. CRISPR clusters are transcribed and processed into CRISPR RNA (crRNA). Functions as a ssRNA-specific endoribonuclease. Involved in the integration of spacer DNA into the CRISPR cassette. Plasmid targeted by CRISPR locus P1 transform wild-type cells very poorly. The protein is CRISPR-associated endoribonuclease Cas2 of Haloferax volcanii (strain ATCC 29605 / DSM 3757 / JCM 8879 / NBRC 14742 / NCIMB 2012 / VKM B-1768 / DS2) (Halobacterium volcanii).